Reading from the N-terminus, the 526-residue chain is Probable metalloreductase AIM14 (526 aa).

A run of 7 helical transmembrane segments spans residues 17–37, 60–80, 96–113, 138–158, 172–192, 199–219, and 221–241; these read IPYGYYVLIVSFFYLVFLGVL, LYLVNPVVHLPILLVAVLLPF, RLGRLSYALLPLNLLLNL, CIIIIAVVHGILFLINWALGE, LAGVLLFAPLISMIFFSIGPM, AFYVIHNLTGISFIFVVAFHA, and PSVTIPYLLINIAILLWQGFA. In terms of domain architecture, Ferric oxidoreductase spans 97–214; sequence LGRLSYALLP…NLTGISFIFV (118 aa). One can recognise an FAD-binding FR-type domain in the interval 238-370; the sequence is QGFAKFYYAK…GGSGISFGLP (133 aa).

The protein belongs to the ferric reductase (FRE) family. AIM14 subfamily.

It is found in the membrane. Probable cell surface metalloreductase. May be involved in iron or copper homeostasis. The polypeptide is Probable metalloreductase AIM14 (AIM14) (Zygosaccharomyces rouxii (strain ATCC 2623 / CBS 732 / NBRC 1130 / NCYC 568 / NRRL Y-229)).